The primary structure comprises 81 residues: Conotoxin Vc6.13 (81 aa).

The signal sequence occupies residues M1–A19. A propeptide spanning residues L20–W44 is cleaved from the precursor. 3 cysteine pairs are disulfide-bonded: C49-C63, C56-C67, and C62-C72.

It belongs to the conotoxin O2 superfamily. In terms of tissue distribution, expressed by the venom duct.

It is found in the secreted. Inhibits voltage-gated ion channels. This Conus victoriae (Queen Victoria cone) protein is Conotoxin Vc6.13.